The sequence spans 795 residues: Protein translocase subunit SecA 2 (795 aa).

Residues glutamine 84, 102 to 106, and aspartate 496 contribute to the ATP site; that span reads GEGKT.

This sequence belongs to the SecA family. Monomer and homodimer. Part of the essential Sec protein translocation apparatus which comprises SecA, SecYEG and auxiliary proteins SecDF. Other proteins may also be involved.

The protein localises to the cell membrane. Its subcellular location is the cytoplasm. The enzyme catalyses ATP + H2O + cellular proteinSide 1 = ADP + phosphate + cellular proteinSide 2.. Its function is as follows. Part of the Sec protein translocase complex. Interacts with the SecYEG preprotein conducting channel. Has a central role in coupling the hydrolysis of ATP to the transfer of proteins into and across the cell membrane, serving as an ATP-driven molecular motor driving the stepwise translocation of polypeptide chains across the membrane. The chain is Protein translocase subunit SecA 2 from Streptococcus agalactiae serotype V (strain ATCC BAA-611 / 2603 V/R).